The primary structure comprises 1282 residues: MVAPISYLTLYNAHNGDSVKIPKPIRFHSLNGLKSFIHESFTDYIISDIENIFLLTSFGMKVKFNIINELNDIYVFDKRLFSGARDETIINAYVNQNEGGYKEMIKPTPSSLVKLEKTNIKQMTSSLKVNDGWSKALFQDCLGVVGQMKAYVKQINTIFKCLNIIFQFGSNFINGIEKSFNNYLNYIKLLNLKTLHRSWNGYYNNLRKFPSFQLKNGTGNIKISDHLNTSELEKSSSFVSKTLPLVINKFNEMSASINSVNDDKVNVDKLIESLRNESIENFKDYDTGSEDIIKDVSRLSQLISHDIDKLSTNVSISLDWVYRIHKDEISPKIFDKATGLYKILQNLYLFKNKIVDESLSIFGKIANLQMRMVNIKNDLRILTNADDNNDIANENEISIHVINNIKSAEDYLSLTIDLPLLFGFMLIEKRRQFEWHEFYSKGIVNNVSEQLSVIIDHEKIFRKLWLKKFGNFLSILNSKDENDALRTVLPSIDVTLVNGNAESNSTFGIINNIQVERDDISTYINALEEYSNAGTTSSPSSKKFSELMKKNFQDLIKCTNNMKRVTKMVSSLSSFTSPVANEIKNNDKLLANSKDENNDKQAEGGGHMSELGEVDYDINLVKGLKIRIRKLENLLHQQQYKDLSNWPVTRSNGANATSTSETDGKFSLILDSNQKTSTSSNSKIDPTNLLQRRQTLPLKLGHEKPTTSQQSNHLDVSTTIDKHLDNIRLKKENNELTNENLKLSNTNRTNEKLIEALNKQISNLKTVNDDQNKHHEEKLRKRDAENQQTITRLETELQAFKPQNNKEVVDLKDKLSLRDAEILDLRKDITRLHDVNEGFTEEVTKLNEKIATLQSDINDVNAMKKDLLSNMASKETDTINHRISLEEEIKKLHSKIEELTEDYENLMDLTQSKHNNLDIMVNYLNNMIIHLLSSIKCLVEQQFETFIEFCFILESMGLLLIKEHNNNKNLDEYKITRVKGLKSKRNDKIVPTSANGNVLDETPIVSTMGNMPTSKVVDDINKIIGWVDDIQSFKNISTKSSEDGDEKSCSANTAGSVSSSVIDDLPEEITNLSVEETNKFNRQSLELVKLFRDIFKSSNGSISKFEDFINTIRFKENICINQNQDDSGVSNKFFLGAITKRFKDVEGFAKKLTKENKSKAHELSQLIGKLNCKISMNSFEMDDLVLFLPTRIDRAEEIDENFQPWAAFNIGAPHYFLRVQKNEGNKTGITHSIKDKEWMVGRVTYIEEHTVTDANFNDKDANPFHLSTGVVWYVVDAKEEIF.

Coiled coils occupy residues 579-641, 722-799, and 834-917; these read VANE…QQYK, KHLD…ELQA, and DVNE…HNNL. Residues 586 to 609 form a disordered region; that stretch reads NDKLLANSKDENNDKQAEGGGHMS. The span at 593-602 shows a compositional bias: basic and acidic residues; sequence SKDENNDKQA.

It belongs to the ATG11 family. Homodimer.

The protein localises to the preautophagosomal structure membrane. The protein resides in the vacuole membrane. Its function is as follows. Involved in cytoplasm to vacuole transport (Cvt), pexophagy, mitophagy and nucleophagy. Recruits mitochondria for their selective degradation via autophagy (mitophagy) during starvation. Works as scaffold proteins that recruit ATG proteins to the pre-autophagosome (PAS), the site of vesicle/autophagosome formation. Required for the Cvt vesicles completion. This chain is Autophagy-related protein 11 (ATG11), found in Debaryomyces hansenii (strain ATCC 36239 / CBS 767 / BCRC 21394 / JCM 1990 / NBRC 0083 / IGC 2968) (Yeast).